The sequence spans 449 residues: tRNA-2-methylthio-N(6)-dimethylallyladenosine synthase (449 aa).

The MTTase N-terminal domain occupies 2-119 (KGLFIRTYGC…LPEMIARASR (118 aa)). Positions 11, 47, 82, 157, 161, and 164 each coordinate [4Fe-4S] cluster. In terms of domain architecture, Radical SAM core spans 143-378 (EADGPAAFVS…QALLREQQTE (236 aa)). The TRAM domain occupies 381-443 (ASQIGKTLPV…LNSLTGELVR (63 aa)).

This sequence belongs to the methylthiotransferase family. MiaB subfamily. As to quaternary structure, monomer. [4Fe-4S] cluster is required as a cofactor.

It localises to the cytoplasm. It carries out the reaction N(6)-dimethylallyladenosine(37) in tRNA + (sulfur carrier)-SH + AH2 + 2 S-adenosyl-L-methionine = 2-methylsulfanyl-N(6)-dimethylallyladenosine(37) in tRNA + (sulfur carrier)-H + 5'-deoxyadenosine + L-methionine + A + S-adenosyl-L-homocysteine + 2 H(+). Catalyzes the methylthiolation of N6-(dimethylallyl)adenosine (i(6)A), leading to the formation of 2-methylthio-N6-(dimethylallyl)adenosine (ms(2)i(6)A) at position 37 in tRNAs that read codons beginning with uridine. This Hyphomonas neptunium (strain ATCC 15444) protein is tRNA-2-methylthio-N(6)-dimethylallyladenosine synthase.